A 1582-amino-acid polypeptide reads, in one-letter code: ATP-binding cassette sub-family C member 8 (1582 aa).

Residues 1–30 (MPLAFCGTENHSAAYRVDQGVLNNGCFVDA) are Extracellular-facing. An intrachain disulfide couples Cys-6 to Cys-26. A glycan (N-linked (GlcNAc...) asparagine) is linked at Asn-10. A helical membrane pass occupies residues 31–47 (LNVVPHVFLLFITFPIL). The Cytoplasmic portion of the chain corresponds to 48–72 (FIGWGSQSSKVHIHHSTWLHFPGHN). A helical transmembrane segment spans residues 73 to 89 (LRWILTFILLFVLVCEI). Residues 90 to 106 (AEGILSDGVTESRHLHL) are Extracellular-facing. Residues 107 to 123 (YMPAGMAFMAAITSVVY) form a helical membrane-spanning segment. Residues 124–136 (YHNIETSNFPKLL) lie on the Cytoplasmic side of the membrane. A helical membrane pass occupies residues 137-153 (IALLIYWTLAFITKTIK). The Extracellular segment spans residues 154–169 (FVKFYDHAIGFSQLRF). Residues 170 to 186 (CLTGLLVILYGMLLLVE) traverse the membrane as a helical segment. Over 187–303 (VNVIRVRRYI…AFGRRLILSS (117 aa)) the chain is Cytoplasmic. Positions 299–602 (LILSSTFRIL…LSSVVRSTVK (304 aa)) constitute an ABC transmembrane type-1 1 domain. A helical transmembrane segment spans residues 304–319 (TFRILADLLGFAGPLC). Topologically, residues 320 to 356 (IFGIVDHLGKENHVFQPKTQFLGVYFVSSQEFLGNAY) are extracellular. Residues 357–372 (VLAVLLFLALLLQRTF) traverse the membrane as a helical segment. Residues 373–438 (LQASYYVAIE…MWFFFLCPNL (66 aa)) lie on the Cytoplasmic side of the membrane. Residues 439–454 (WTMPVQIIVGVILLYY) traverse the membrane as a helical segment. The Extracellular segment spans residues 455-460 (ILGVSA). The chain crosses the membrane as a helical span at residues 461–473 (LIGAAVIILLAPV). Topologically, residues 474–541 (QYFVATKLSQ…SLRAFAVYTS (68 aa)) are cytoplasmic. Residues 542–557 (ISIFMNTAIPIAAVLI) form a helical membrane-spanning segment. The Extracellular segment spans residues 558-576 (TFVGHVSFFKESDLSPSVA). Residues 577–592 (FASLSLFHILVTPLFL) traverse the membrane as a helical segment. Residues 593-1013 (LSSVVRSTVK…YLSSAGILLL (421 aa)) lie on the Cytoplasmic side of the membrane. The region spanning 679 to 930 (VQIIGGFFTW…ECQLFEHWKT (252 aa)) is the ABC transporter 1 domain. The ATP site is built by Trp-688, Gly-716, Ser-720, and Ser-721. Ser-720 contacts Mg(2+). The segment at 741–766 (SNLPDSEGEDPSSPERETAAGSDIRS) is disordered. Gln-775 lines the Mg(2+) pocket. A compositionally biased stretch (basic and acidic residues) spans 939–950 (LEKETVMERKAS). Residues 939–962 (LEKETVMERKASEPSQGLPRAMSS) form a disordered region. Residues 1013–1307 (LSLLVFSQLL…MVRNLADMEI (295 aa)) form the ABC transmembrane type-1 2 domain. The chain crosses the membrane as a helical span at residues 1014–1031 (SLLVFSQLLKHMVLVAID). At 1032–1067 (YWLAKWTDSALVLSPAARNCSLSQECDLDQSVYAMV) the chain is on the extracellular side. The N-linked (GlcNAc...) asparagine glycan is linked to Asn-1050. A helical transmembrane segment spans residues 1068-1084 (FTLLCSLGIVLCLVTSV). At 1085-1143 (TVEWTGLKVAKRLHRSLLNRIILAPMRFFETTPLGSILNRFSSDCNTIDQHIPSTLECL) the chain is on the cytoplasmic side. Residues 1144-1161 (SRSTLLCVSALTVISYVT) form a helical membrane-spanning segment. A topological domain (extracellular) is located at residue Pro-1162. The chain crosses the membrane as a helical span at residues 1163-1175 (VFLVALLPLAVVC). Residues 1176–1249 (YFIQKYFRVA…FLTAANRWLE (74 aa)) lie on the Cytoplasmic side of the membrane. The chain crosses the membrane as a helical span at residues 1250 to 1265 (VCMEYIGACVVLIAAA). Over 1266 to 1281 (TSISNSLHRELSAGLV) the chain is Extracellular. A helical membrane pass occupies residues 1282–1297 (GLGLTYALMVSNYLNW). Residues 1298-1582 (MVRNLADMEI…VFASFVRADK (285 aa)) lie on the Cytoplasmic side of the membrane. An ABC transporter 2 domain is found at 1345–1579 (IQIQNLSVRY…KDSVFASFVR (235 aa)). ADP-binding residues include Thr-1381, Gly-1382, Gly-1384, Lys-1385, Ser-1386, and Ser-1387. Ser-1483 is a binding site for ATP.

It belongs to the ABC transporter superfamily. ABCC family. Conjugate transporter (TC 3.A.1.208) subfamily. In terms of assembly, forms an heterooctamer with KCNJ11; four ABCC8/SUR1 molecules interact with one KCNJ11 homotetramer.

Its subcellular location is the cell membrane. KATP channels are regulated by cytoplasmic ATP/ADP ratios; ATP inhibits the channel by closing the pore, while ADP activates the channel. Activated by phosphatidylinositol 4,5-biphosphate (PtdIns(4,5)P2). Functionally, regulator subunit of pancreatic ATP-sensitive potassium channel (KATP), playing a major role in the regulation of insulin release. In pancreatic cells, it forms KATP channels with KCNJ11; KCNJ11 forms the channel pore while ABCC8 is required for activation and regulation. This is ATP-binding cassette sub-family C member 8 (ABCC8) from Cricetus cricetus (Black-bellied hamster).